A 291-amino-acid chain; its full sequence is Small ribosomal subunit protein uS2 (291 aa).

Residues 235 to 291 (NLQEDEESGDSGVDPYQDREEEITDYSNYTPKDEASGDDEDEEDNSLVNDEDLYDDK) form a disordered region. Positions 270–291 (SGDDEDEEDNSLVNDEDLYDDK) are enriched in acidic residues.

The protein belongs to the universal ribosomal protein uS2 family.

In Treponema denticola (strain ATCC 35405 / DSM 14222 / CIP 103919 / JCM 8153 / KCTC 15104), this protein is Small ribosomal subunit protein uS2.